A 518-amino-acid polypeptide reads, in one-letter code: Mitochondrial distribution and morphology protein 34 (518 aa).

The SMP-LTD domain occupies 1–198 (MSFKVNWNTL…LPTLIHRLSL (198 aa)). Disordered regions lie at residues 335 to 369 (SRPKRRVIKLGSKKSSVKSTPSAETLASPIPSEMS) and 491 to 518 (IPDVKSHPGTGRKLDTGFEMPPPPPYQV). A compositionally biased stretch (basic residues) spans 336–350 (RPKRRVIKLGSKKSS). Positions 492–506 (PDVKSHPGTGRKLDT) are enriched in basic and acidic residues.

The protein belongs to the MDM34 family. Component of the ER-mitochondria encounter structure (ERMES) or MDM complex, composed of MMM1, MDM10, MDM12 and MDM34.

The protein resides in the mitochondrion outer membrane. In terms of biological role, component of the ERMES/MDM complex, which serves as a molecular tether to connect the endoplasmic reticulum (ER) and mitochondria. Components of this complex are involved in the control of mitochondrial shape and protein biogenesis, and function in nonvesicular lipid trafficking between the ER and mitochondria. MDM34 is required for the interaction of the ER-resident membrane protein MMM1 and the outer mitochondrial membrane-resident beta-barrel protein MDM10. This chain is Mitochondrial distribution and morphology protein 34, found in Meyerozyma guilliermondii (strain ATCC 6260 / CBS 566 / DSM 6381 / JCM 1539 / NBRC 10279 / NRRL Y-324) (Yeast).